The chain runs to 1445 residues: Tensin-3 (1445 aa).

Positions 1-170 constitute a Phosphatase tensin-type domain; sequence MEEGHGLDLT…QFLSGLLSGS (170 aa). One can recognise a C2 tensin-type domain in the interval 175 to 301; it reads ASPLFLHFVI…GKVELVFSAT (127 aa). Threonine 323 carries the phosphothreonine modification. Phosphoserine is present on residues serine 332 and serine 361. The segment at 358-421 is disordered; the sequence is RKKSSSDPGI…GTRRGLSAQE (64 aa). Polar residues predominate over residues 386–400; it reads TLSVSSDSGHSTASA. 2 positions are modified to phosphoserine: serine 440 and serine 516. The segment at 538-568 is disordered; that stretch reads VPDLGLGMDGPYERERTFGSREPKQPQPLLR. The span at 548–561 shows a compositional bias: basic and acidic residues; the sequence is PYERERTFGSREPK. Phosphoserine is present on serine 571. Disordered regions lie at residues 618-695 and 717-769; these read DNPG…TLDI and PTHM…QPLG. The residue at position 632 (threonine 632) is a Phosphothreonine. Phosphoserine is present on residues serine 649, serine 660, serine 687, and serine 690. Residues 723–733 are compositionally biased toward polar residues; it reads LGSQANGSVSP. 2 positions are modified to phosphoserine: serine 735 and serine 776. A Phosphotyrosine modification is found at tyrosine 780. 3 positions are modified to phosphoserine: serine 811, serine 866, and serine 901. Disordered stretches follow at residues 859–981 and 1076–1127; these read ALRH…TRKD and GHSS…PHSG. Pro residues predominate over residues 864-873; the sequence is PFSPPEPPLS. The segment covering 914-935 has biased composition (polar residues); sequence ASSTPSFQQAFASSCTISSNGP. The span at 1099 to 1109 shows a compositional bias: basic and acidic residues; sequence PEKKRASEGDR. Residues 1110–1127 show a composition bias toward low complexity; sequence SLGSVSPSSSGFSSPHSG. A phosphoserine mark is found at serine 1149 and serine 1154. Residues 1172-1282 form the SH2 domain; sequence WYKADISREQ…ALPCKLLIPE (111 aa). Phosphoserine is present on residues serine 1293 and serine 1441. The region spanning 1310–1444 is the PTB domain; sequence ACNVWYLNSV…SKVMIGSPKK (135 aa).

Belongs to the PTEN phosphatase protein family. Interacts with EGFR; EGF promotes the interaction with EGFR. Interacts with PTK2/FAK1 and BCAR1. Tyrosine phosphorylation is critical for these interactions. Interacts with Rho GTPase-activating protein DLC1 and with the regulatory p85 subunit of the PI3K kinase complex; in resting cells, interacts (via C2 tensin-type domain) with DLC1 but, following growth factor stimulation, TNS3 is phosphorylated which leads to weakened interaction with DLC1 and enhanced interaction (via C2 tensin-type domain) with p85 while DLC1 interaction with PTEN increases. Interacts (when phosphorylated on the SH2 domain) with integrins ITGB1, ITGB3 and ITGB5 and with scaffolding protein PEAK1 (phosphorylated on 'Tyr-635'); mediates the association of PEAK1 with ITGB1, ITGB3 and ITGB5. Interacts (via N-terminus) with DOCK5 (via N-terminus); the interaction increases DOCK5 guanine nucleotide exchange activity towards Rac. Interacts with receptor tyrosine kinase MET. Phosphorylated on Ser/Thr and Tyr residues. Phosphorylated on Thr-323 in the C2-type tensin domain following EGF stimulation which changes its binding preference from DLC1 to the p85 regulatory subunit of the PI3K kinase complex. EGF induces tyrosine phosphorylation in a time- and dose-dependent manner. Phosphorylation of the SH2 domain enhances interaction with PEAK1. Expressed in umbilical vein endothelial cells, epithelial cells, and fibroblasts cells (at protein level). Highly expressed in thyroid, kidney and placenta. Low expression in heart, skeletal muscle, spleen, liver, and lung. Expressed at higher levels in tonsil-derived mesenchymal stem cells (MSCs) than in adipose tissue-derived MSCs or bone marrow-derived MSCs. Expressed in tumor endothelial cells. Expression seems to be down-regulated in thyroid tumor tissues and in anaplastic carcinomas.

The protein resides in the cell junction. It localises to the focal adhesion. Its subcellular location is the cell projection. The protein localises to the podosome. Functionally, may act as a protein phosphatase and/or a lipid phosphatase. Involved in the dissociation of the integrin-tensin-actin complex. EGF activates TNS4 and down-regulates TNS3 which results in capping the tail of ITGB1. Increases DOCK5 guanine nucleotide exchange activity towards Rac and plays a role in osteoclast podosome organization. Enhances RHOA activation in the presence of DLC1. Required for growth factor-induced epithelial cell migration; growth factor stimulation induces TNS3 phosphorylation which changes its binding preference from DLC1 to the p85 regulatory subunit of the PI3K kinase complex, displacing PI3K inhibitor PTEN and resulting in translocation of the TNS3-p85 complex to the leading edge of migrating cells to promote RAC1 activation. Meanwhile, PTEN switches binding preference from p85 to DLC1 and the PTEN-DLC1 complex translocates to the posterior of migrating cells to activate RHOA. Acts as an adapter protein by bridging the association of scaffolding protein PEAK1 with integrins ITGB1, ITGB3 and ITGB5 which contributes to the promotion of cell migration. Controls tonsil-derived mesenchymal stem cell proliferation and differentiation by regulating the activity of integrin ITGB1. The polypeptide is Tensin-3 (TNS3) (Homo sapiens (Human)).